A 149-amino-acid polypeptide reads, in one-letter code: MPYYAALGLDVGRRRIGVAGCDRLGITVQGLTTIVRRDFASDVAAISAIAKERQVELLVIGLPYSMDGSLGSQAKQTQRFATRLSKALQLPITYVDERLTSFEAEEMIKAVGRSPSRDKGAIDRKAAALILQQWLDEQREPRRFGSTQH.

Belongs to the YqgF nuclease family.

It localises to the cytoplasm. Functionally, could be a nuclease involved in processing of the 5'-end of pre-16S rRNA. This Synechococcus sp. (strain ATCC 27144 / PCC 6301 / SAUG 1402/1) (Anacystis nidulans) protein is Putative pre-16S rRNA nuclease.